Here is a 406-residue protein sequence, read N- to C-terminus: Arginine deiminase (406 aa).

The Amidino-cysteine intermediate role is filled by Cys396.

The protein belongs to the arginine deiminase family.

Its subcellular location is the cytoplasm. The enzyme catalyses L-arginine + H2O = L-citrulline + NH4(+). It participates in amino-acid degradation; L-arginine degradation via ADI pathway; carbamoyl phosphate from L-arginine: step 1/2. This is Arginine deiminase from Aliivibrio fischeri (strain ATCC 700601 / ES114) (Vibrio fischeri).